The sequence spans 602 residues: Elongation factor 4 (602 aa).

A tr-type G domain is found at 7–188 (ENIRNFSIIA…SIIRLVPPPK (182 aa)). GTP contacts are provided by residues 19–24 (DHGKST) and 135–138 (NKID).

Belongs to the TRAFAC class translation factor GTPase superfamily. Classic translation factor GTPase family. LepA subfamily.

The protein resides in the cell inner membrane. The catalysed reaction is GTP + H2O = GDP + phosphate + H(+). Its function is as follows. Required for accurate and efficient protein synthesis under certain stress conditions. May act as a fidelity factor of the translation reaction, by catalyzing a one-codon backward translocation of tRNAs on improperly translocated ribosomes. Back-translocation proceeds from a post-translocation (POST) complex to a pre-translocation (PRE) complex, thus giving elongation factor G a second chance to translocate the tRNAs correctly. Binds to ribosomes in a GTP-dependent manner. This is Elongation factor 4 from Chlamydia trachomatis serovar A (strain ATCC VR-571B / DSM 19440 / HAR-13).